The following is a 372-amino-acid chain: Tryptophan--tRNA ligase (372 aa).

Residues 79-87 (PSGKFHFGH) carry the 'HIGH' region motif. Residues 247 to 268 (KLQPGLDGRKMSSSRPDSTIFL) form a disordered region. Positions 256–260 (KMSSS) match the 'KMSKS' region motif. The span at 257–267 (MSSSRPDSTIF) shows a compositional bias: polar residues.

The protein belongs to the class-I aminoacyl-tRNA synthetase family.

It is found in the cytoplasm. The enzyme catalyses tRNA(Trp) + L-tryptophan + ATP = L-tryptophyl-tRNA(Trp) + AMP + diphosphate + H(+). The protein is Tryptophan--tRNA ligase of Aeropyrum pernix (strain ATCC 700893 / DSM 11879 / JCM 9820 / NBRC 100138 / K1).